A 240-amino-acid polypeptide reads, in one-letter code: MSRLLPLLRSRTARSLRPGPAAAAAPRPPSWCCCGRGLLALAPPGGLPGGPRRLGTHPKKEPMEALNTAQGARDFIYSLHSTERSCLLKELHRFESIAIAQEKLEAPPPTPGQLRYVFIHNAIPFIGFGFLDNAIMIVAGTHIEMSIGIILGISTMAAAALGNLVSDLAGLGLAGYVEALASRLGLSIPDLTPKQVDMWQTRLSTHLGKAVGVTIGCILGMFPLIFFGGGEEDEKLETKS.

The N-terminal 61 residues, 1 to 61 (MSRLLPLLRS…RRLGTHPKKE (61 aa)), are a transit peptide targeting the mitochondrion. The Cytoplasmic portion of the chain corresponds to 62–110 (PMEALNTAQGARDFIYSLHSTERSCLLKELHRFESIAIAQEKLEAPPPT). Residues 111–131 (PGQLRYVFIHNAIPFIGFGFL) traverse the membrane as a helical segment. Residues 132–142 (DNAIMIVAGTH) lie on the Extracellular side of the membrane. Residues 143–165 (IEMSIGIILGISTMAAAALGNLV) traverse the membrane as a helical segment. At 166 to 209 (SDLAGLGLAGYVEALASRLGLSIPDLTPKQVDMWQTRLSTHLGK) the chain is on the cytoplasmic side. A helical transmembrane segment spans residues 210–230 (AVGVTIGCILGMFPLIFFGGG). The Extracellular segment spans residues 231 to 240 (EEDEKLETKS).

Monomer. Homodimer. Interacts with GJA1. Interacts weakly with DSP. Interacts with SCN1B. In terms of tissue distribution, predominantly expressed the ventricular tissue (at protein level).

It is found in the cell membrane. It localises to the mitochondrion inner membrane. Essential for maintaining proper cardiac intercalated disk (ICD) structure and function as well as cardiac conduction velocity in the heart. Its association with SCN1B is required for stabilizing the perinexus in the ICD and for localization of GJA1 and SCN5A to the ICD. May regulate the function of the gap junction protein GJA1 and may contribute to the stability and proper localization of GJA1 to cardiac intercalated disk thereby regulating gap junction communication. May also play a role in the regulation of mitochondrial respiration and mitochondrial DNA copy number maintenance. In Homo sapiens (Human), this protein is Transmembrane protein 65 (TMEM65).